Reading from the N-terminus, the 172-residue chain is Peptide methionine sulfoxide reductase MsrA (172 aa).

Residue C12 is part of the active site.

It belongs to the MsrA Met sulfoxide reductase family.

It carries out the reaction L-methionyl-[protein] + [thioredoxin]-disulfide + H2O = L-methionyl-(S)-S-oxide-[protein] + [thioredoxin]-dithiol. It catalyses the reaction [thioredoxin]-disulfide + L-methionine + H2O = L-methionine (S)-S-oxide + [thioredoxin]-dithiol. In terms of biological role, has an important function as a repair enzyme for proteins that have been inactivated by oxidation. Catalyzes the reversible oxidation-reduction of methionine sulfoxide in proteins to methionine. The sequence is that of Peptide methionine sulfoxide reductase MsrA from Ligilactobacillus salivarius (strain UCC118) (Lactobacillus salivarius).